The following is a 307-amino-acid chain: 1-aminocyclopropane-1-carboxylate oxidase 5 (307 aa).

The stretch at 106 to 134 forms a coiled coil; the sequence is SNIKETMGEYREEVRKLASKMMEVMDENL. Residues 152–256 enclose the Fe2OG dioxygenase domain; it reads GEETAFFGTK…RRSIASFYNP (105 aa). Fe cation is bound by residues His180, Asp182, and His237. Arg247 provides a ligand contact to 2-oxoglutarate.

This sequence belongs to the iron/ascorbate-dependent oxidoreductase family. Fe(2+) serves as cofactor.

The catalysed reaction is 1-aminocyclopropane-1-carboxylate + L-ascorbate + O2 = ethene + L-dehydroascorbate + hydrogen cyanide + CO2 + 2 H2O. Its pathway is alkene biosynthesis; ethylene biosynthesis via S-adenosyl-L-methionine; ethylene from S-adenosyl-L-methionine: step 2/2. Enzyme involved in the ethylene biosynthesis. This chain is 1-aminocyclopropane-1-carboxylate oxidase 5, found in Arabidopsis thaliana (Mouse-ear cress).